The sequence spans 177 residues: Mitochondrial inner membrane protease subunit 2 (177 aa).

Active-site residues include serine 41 and lysine 91. Residues threonine 134–tryptophan 152 form a helical membrane-spanning segment.

This sequence belongs to the peptidase S26 family. IMP2 subfamily. As to quaternary structure, component of the mitochondrial inner membrane peptidase (IMP) complex which at least consists of IMP1, IMP2 and SOM1. In terms of processing, the N-terminus is blocked.

It localises to the mitochondrion inner membrane. Catalytic component of the mitochondrial inner membrane peptidase (IMP) complex. IMP catalyzes the removal of signal peptides required for the targeting of proteins from the mitochondrial matrix, across the inner membrane, into the inter-membrane space. The two catalytic IMP subunits seem to have non-overlapping substrate specificities. IMP2 substrates include nuclear encoded CYB2, mitochondrially encoded COX2 and cytochrome c1. Required for the stability of IMP1. This is Mitochondrial inner membrane protease subunit 2 (IMP2) from Saccharomyces cerevisiae (strain ATCC 204508 / S288c) (Baker's yeast).